A 1006-amino-acid polypeptide reads, in one-letter code: Unconventional myosin-Id (1006 aa).

A2 bears the N-acetylalanine mark. The Myosin motor domain occupies 9–695 (FGKADFVLMD…TLFTLEELRA (687 aa)). 102–109 (GESGAGKT) is an ATP binding site. S200 carries the post-translational modification Phosphoserine. Y536 is modified (phosphotyrosine). Positions 572–594 (MIALVDNLASKEPYYVRCIKPND) are actin-binding. IQ domains follow at residues 699–719 (VRVVLFLQKVWRGTLARMRYK) and 721–741 (TKAALTIIRYYRRYKVKSYIH). The TH1 domain occupies 812–1005 (GQRADLGLQR…RSGFILSVPG (194 aa)).

Belongs to the TRAFAC class myosin-kinesin ATPase superfamily. Myosin family. In terms of assembly, interacts (via the two IQ motifs) with calmodulin. Binds an additional calmodulin chain via a third, C-terminal region. Interacts with F-actin. In terms of tissue distribution, detected in enterocytes at the intestinal brush border membrane. Detected at the tip of intestinal microvilli (at protein level).

It localises to the cytoplasm. It is found in the perikaryon. Its subcellular location is the cell projection. The protein localises to the dendrite. The protein resides in the early endosome. It localises to the cell cortex. It is found in the basolateral cell membrane. In terms of biological role, unconventional myosin that functions as actin-based motor protein with ATPase activity. Plays a role in endosomal protein trafficking, and especially in the transfer of cargo proteins from early to recycling endosomes. Required for normal planar cell polarity in ciliated tracheal cells, for normal rotational polarity of cilia, and for coordinated, unidirectional ciliary movement in the trachea. Required for normal, polarized cilia organization in brain ependymal epithelial cells. This chain is Unconventional myosin-Id, found in Mus musculus (Mouse).